A 578-amino-acid chain; its full sequence is NADPH oxidase 4 (578 aa).

Over 1–16 (MALSWRSWLANEGVKH) the chain is Cytoplasmic. Residues 17–37 (LCLLVWLSLNVLLFWKTFLLY) form a helical membrane-spanning segment. Over 38-62 (NQGPEYYYIHQMLGLGLCLSRASAS) the chain is Extracellular. A Ferric oxidoreductase domain is found at 58–303 (RASASVLNLN…YCAERLYRCI (246 aa)). A helical membrane pass occupies residues 63–83 (VLNLNCSLILLPMCRTVLAYL). Residues 84 to 104 (RGSQKVPSRRTRRLLDKSKTL) are Cytoplasmic-facing. The chain crosses the membrane as a helical span at residues 105–125 (HITCGITICIFSGVHVAAHLV). Topologically, residues 126 to 154 (NALNFSVNYSEHFLALNAARYQNEDPRKL) are extracellular. N-linked (GlcNAc...) asparagine glycosylation is present at Asn-133. The helical transmembrane segment at 155–175 (LFTTVPGLTGVCMVVVLFLMV) threads the bilayer. Residues 176–188 (TASTYAIRVSNYD) lie on the Cytoplasmic side of the membrane. The chain crosses the membrane as a helical span at residues 189 to 209 (IFWYTHNLFFVFYMLLLLHVS). Residues 210-424 (GGLLKYQTNL…SPFEESLNYE (215 aa)) are Extracellular-facing. Residues 218–273 (NLDTHPPGCISLNRTPSQNMSIADYVSEHFHGSLPGGFSKLEDHYQKTLVKICLEE) are E-loop; essential for H2O2 generating catalytic activity. The tract at residues 248–575 (HGSLPGGFSK…YGTKFEYNKE (328 aa)) is mediates interaction with TLR4. The 116-residue stretch at 304–419 (RSNKPVTIIS…DGPFGSPFEE (116 aa)) folds into the FAD-binding FR-type domain. The helical transmembrane segment at 425–445 (VSLCVAGGIGVTPFASILNTL) threads the bilayer. Topologically, residues 446-578 (LDDWKPYKLR…KFEYNKESFS (133 aa)) are cytoplasmic.

Interacts with TLR4. Interacts with, relocalizes and stabilizes CYBA/p22phox. Interacts with protein disulfide isomerase. Interacts with PPP1R15A. Interacts with LRRC8A; this interaction prevents the ubiquitin-mediated degradation of LRRC8A. Heme is required as a cofactor. In terms of processing, N-glycosylation is required for the function. In terms of tissue distribution, expressed in vascular smooth muscle.

Its subcellular location is the cytoplasm. The protein resides in the endoplasmic reticulum membrane. It localises to the cell membrane. The protein localises to the cell junction. It is found in the focal adhesion. Its subcellular location is the nucleus. It carries out the reaction NADPH + 2 O2 = 2 superoxide + NADP(+) + H(+). The enzyme catalyses NADPH + O2 + H(+) = H2O2 + NADP(+). With respect to regulation, activated by insulin. Inhibited by diphenylene iodonium. Inhibited by plumbagin. Activated by phorbol 12-myristate 13-acetate (PMA). NADPH oxidase that catalyzes predominantly the reduction of oxygen to H2O2. Can also catalyze to a smaller extent, the reduction of oxygen to superoxide. May function as an oxygen sensor regulating the KCNK3/TASK-1 potassium channel and HIF1A activity. May regulate insulin signaling cascade. May play a role in apoptosis, bone resorption and lipolysaccharide-mediated activation of NFKB. May produce superoxide in the nucleus and play a role in regulating gene expression upon cell stimulation. Promotes ferroptosis, reactive oxygen species production and reduced glutathione (GSH) levels by activating NLRP3 inflammasome activation and cytokine release. The polypeptide is NADPH oxidase 4 (Nox4) (Rattus norvegicus (Rat)).